A 310-amino-acid chain; its full sequence is Ribosomal protein L11 methyltransferase (310 aa).

Residues threonine 156, glycine 179, aspartate 201, and asparagine 246 each contribute to the S-adenosyl-L-methionine site.

It belongs to the methyltransferase superfamily. PrmA family.

It is found in the cytoplasm. The enzyme catalyses L-lysyl-[protein] + 3 S-adenosyl-L-methionine = N(6),N(6),N(6)-trimethyl-L-lysyl-[protein] + 3 S-adenosyl-L-homocysteine + 3 H(+). In terms of biological role, methylates ribosomal protein L11. The protein is Ribosomal protein L11 methyltransferase of Desulfatibacillum aliphaticivorans.